The primary structure comprises 689 residues: Armadillo-like helical domain-containing protein 3 (689 aa).

A helical membrane pass occupies residues 520–538 (IFTLALMIVNLFNMFITYG).

It belongs to the ARMH3 family. Interacts with PI4KB. Interacts with GBF1.

It localises to the golgi apparatus membrane. It is found in the cytoplasm. Its function is as follows. Involved in GBF1 recruitment, Golgi maintenance and protein secretion. The chain is Armadillo-like helical domain-containing protein 3 from Homo sapiens (Human).